A 258-amino-acid polypeptide reads, in one-letter code: tRNA pseudouridine synthase A (258 aa).

Aspartate 52 acts as the Nucleophile in catalysis. Tyrosine 110 serves as a coordination point for substrate.

This sequence belongs to the tRNA pseudouridine synthase TruA family. As to quaternary structure, homodimer.

The catalysed reaction is uridine(38/39/40) in tRNA = pseudouridine(38/39/40) in tRNA. In terms of biological role, formation of pseudouridine at positions 38, 39 and 40 in the anticodon stem and loop of transfer RNAs. The protein is tRNA pseudouridine synthase A of Francisella tularensis subsp. holarctica (strain LVS).